A 653-amino-acid polypeptide reads, in one-letter code: DNA mismatch repair protein MutL (653 aa).

The disordered stretch occupies residues 375 to 425 (QNTPDYPRKAPRDNDRDESDNPQVRERAVSNPWVASPKTASTGKERYGSAS). A compositionally biased stretch (basic and acidic residues) spans 380-389 (YPRKAPRDND).

Belongs to the DNA mismatch repair MutL/HexB family.

In terms of biological role, this protein is involved in the repair of mismatches in DNA. It is required for dam-dependent methyl-directed DNA mismatch repair. May act as a 'molecular matchmaker', a protein that promotes the formation of a stable complex between two or more DNA-binding proteins in an ATP-dependent manner without itself being part of a final effector complex. The chain is DNA mismatch repair protein MutL from Vibrio cholerae serotype O1 (strain ATCC 39541 / Classical Ogawa 395 / O395).